The following is a 471-amino-acid chain: 3-isopropylmalate dehydratase large subunit (471 aa).

[4Fe-4S] cluster is bound by residues C347, C407, and C410.

It belongs to the aconitase/IPM isomerase family. LeuC type 1 subfamily. As to quaternary structure, heterodimer of LeuC and LeuD. The cofactor is [4Fe-4S] cluster.

The catalysed reaction is (2R,3S)-3-isopropylmalate = (2S)-2-isopropylmalate. It participates in amino-acid biosynthesis; L-leucine biosynthesis; L-leucine from 3-methyl-2-oxobutanoate: step 2/4. Catalyzes the isomerization between 2-isopropylmalate and 3-isopropylmalate, via the formation of 2-isopropylmaleate. The sequence is that of 3-isopropylmalate dehydratase large subunit from Acaryochloris marina (strain MBIC 11017).